The following is a 149-amino-acid chain: Protein FAM72C (149 aa).

The protein belongs to the FAM72 family.

This is Protein FAM72C (FAM72C) from Homo sapiens (Human).